The following is a 195-amino-acid chain: Cysteine/O-acetylserine efflux protein (195 aa).

The Periplasmic segment spans residues 1–7 (MTPTLLS). The chain crosses the membrane as a helical span at residues 8-28 (AFWTYTLITAMTPGPNNILAL). Residues 29 to 46 (SSATSHGFRQSTRVLAGM) lie on the Cytoplasmic side of the membrane. The chain crosses the membrane as a helical span at residues 47-67 (SLGFLIVMLLCAGISFSLAVI). Topologically, residues 68 to 69 (DP) are periplasmic. Residues 70 to 90 (AAVHLLSWAGAAYIVWLAWKI) form a helical membrane-spanning segment. At 91–104 (ATSPTKEDGLQAKP) the chain is on the cytoplasmic side. Residues 105-125 (ISFWASFALQFVNVKIILYGV) form a helical membrane-spanning segment. Topologically, residues 126 to 141 (TALSTFVLPQTQALSW) are periplasmic. The chain crosses the membrane as a helical span at residues 142-162 (VVGVSVLLAMIGTFGNVCWAL). Residues 163–176 (AGHLFQRLFRQYGR) are Cytoplasmic-facing. Residues 177 to 194 (QLNIVLALLLIYCAVRIF) form a helical membrane-spanning segment. A topological domain (periplasmic) is located at residue Tyr195.

Belongs to the Rht family.

It is found in the cell inner membrane. The enzyme catalyses O-acetyl-L-serine(in) = O-acetyl-L-serine(out). The catalysed reaction is L-cysteine(in) = L-cysteine(out). Its function is as follows. Exporter of O-acetylserine (OAS) and cysteine. The protein is Cysteine/O-acetylserine efflux protein (eamB) of Escherichia coli O139:H28 (strain E24377A / ETEC).